Here is a 480-residue protein sequence, read N- to C-terminus: Altronate oxidoreductase (480 aa).

19-30 (ILQFGEGNFLRG) serves as a coordination point for NAD(+).

It belongs to the mannitol dehydrogenase family. UxaB subfamily.

It catalyses the reaction D-altronate + NAD(+) = keto-D-tagaturonate + NADH + H(+). It functions in the pathway carbohydrate metabolism; pentose and glucuronate interconversion. The polypeptide is Altronate oxidoreductase (Bacillus subtilis (strain 168)).